We begin with the raw amino-acid sequence, 78 residues long: Putative gastrointestinal growth factor xP1 (78 aa).

The first 23 residues, 1–23, serve as a signal peptide directing secretion; the sequence is MNYKVFCLVAIALIVGSIGSANG. Positions 30–73 constitute a P-type domain; the sequence is EQCSVERLARVNCGYSGITPQECTKQGCCFDSTIQDAPWCFYPR. Intrachain disulfides connect Cys-32-Cys-58, Cys-42-Cys-57, and Cys-52-Cys-69.

As to expression, stomach mucosa.

The protein localises to the secreted. May act as a growth factor. The sequence is that of Putative gastrointestinal growth factor xP1 (p1) from Xenopus laevis (African clawed frog).